A 721-amino-acid chain; its full sequence is VKIVVERDPIKTSFEKWAKPGHFSRTLAKGPNTTTWIWNLHADAHDFDSHTNDLEEISRKVFSAHFGQLAIILIWLSGMYFHGARFSNYEAWLSDPTRIKPSAQVVWPIVGQEILNGDVGGGFRGIQITSGFFQIWRASGITSELQLYCTAIGALIFAALMLFAGWFHYHKAAPKLAWFQDVESMLNHHLAGLLGLGSLSWAGHQVHVSLPINQLLDAGVDPKEIPLPHEFISNRDLVAQLYPSFAKGLTPFFALNWSEYSEFLTFRGGLNPVTGGLWLTDTAHHHLAIAILFLIAGHMYRTNWGIGHSLKEILEAHKGPFTGEGHKGIYEILTTSWHAQLALNLAMLGSLTIVVAHHMYSMPPYPYLAIDYGTQLSLFTHHMWIRGFLIVGAAAHAAIFMVRDYDPTIQYNNLLDRVLRHRDAIVSHLNWACIFLGFHSFGLYIHNDTMSALGRPQDMFSDTAIQLQPIFAQWIQNTHASAPSSTAPGAAASTSLTWGGGDLLAVGGKVALLPIPLGTADFLVHHIHAFTIHVTVLILLKGVLFARSSRLIPDKANLGFRFPCDGPGRGGTCQVSAWDHVFLGLFWMYNAISVVIFHFSWKMQSDVWGSISDRGVVTHITGGNFAQSSITINGWLRDFLWAQASQVIQSYGSSLSAYGLFFLGAHFVWAFSLMFLFSGRGYWQELIESIVWAHNKLKVAPAIQPRALSIVQGRAVGVAHY.

The next 8 membrane-spanning stretches (helical) occupy residues 61 to 84 (VFSA…FHGA), 147 to 170 (LYCT…FHYH), 186 to 210 (LNHH…HVSL), 282 to 300 (TAHH…GHMY), 337 to 360 (WHAQ…HHMY), 376 to 402 (LSLF…IFMV), 424 to 446 (AIVS…LYIH), and 522 to 540 (FLVH…LILL). [4Fe-4S] cluster-binding residues include cysteine 564 and cysteine 573. 2 helical membrane-spanning segments follow: residues 580-601 (HVFL…HFSW) and 655-677 (LSAY…MFLF). Histidine 666 serves as a coordination point for chlorophyll a'. 2 residues coordinate chlorophyll a: methionine 674 and tyrosine 682. Tryptophan 683 contributes to the phylloquinone binding site. A helical transmembrane segment spans residues 715–721 (AVGVAHY).

This sequence belongs to the PsaA/PsaB family. In terms of assembly, the PsaA/B heterodimer binds the P700 chlorophyll special pair and subsequent electron acceptors. PSI consists of a core antenna complex that captures photons, and an electron transfer chain that converts photonic excitation into a charge separation. The eukaryotic PSI reaction center is composed of at least 11 subunits. P700 is a chlorophyll a/chlorophyll a' dimer, A0 is one or more chlorophyll a, A1 is one or both phylloquinones and FX is a shared 4Fe-4S iron-sulfur center. serves as cofactor.

Its subcellular location is the plastid. It localises to the chloroplast thylakoid membrane. The catalysed reaction is reduced [plastocyanin] + hnu + oxidized [2Fe-2S]-[ferredoxin] = oxidized [plastocyanin] + reduced [2Fe-2S]-[ferredoxin]. PsaA and PsaB bind P700, the primary electron donor of photosystem I (PSI), as well as the electron acceptors A0, A1 and FX. PSI is a plastocyanin-ferredoxin oxidoreductase, converting photonic excitation into a charge separation, which transfers an electron from the donor P700 chlorophyll pair to the spectroscopically characterized acceptors A0, A1, FX, FA and FB in turn. Oxidized P700 is reduced on the lumenal side of the thylakoid membrane by plastocyanin. This is Photosystem I P700 chlorophyll a apoprotein A1 from Ginkgo biloba (Ginkgo).